The following is a 708-amino-acid chain: Kelch-like protein 11 (708 aa).

A signal peptide spans 1-15; that stretch reads MAAAAVAAAAAAAAA. The tract at residues 47-70 is disordered; it reads DFGPGPGISAMEASGGDPGPEAED. The region spanning 94–170 is the BTB domain; it reads CDITLCFGGA…MYTGRIRVST (77 aa). The region spanning 205–307 is the BACK domain; that stretch reads CVAIHSLAHM…KPTYLTRHVK (103 aa). 5 Kelch repeats span residues 360–407, 408–453, 455–501, 503–556, and 610–661; these read VIMV…VTES, YVYV…EVKG, LYSI…AIED, FVYI…VVNS, and DVFI…HVRI. At Ser-465 the chain carries Phosphoserine.

Component of a cullin-RING-based BCR (BTB-CUL3-RBX1) E3 ubiquitin-protein ligase complex. Homodimer. Interacts with CUL3.

Functionally, component of a cullin-RING-based BCR (BTB-CUL3-RBX1) E3 ubiquitin-protein ligase complex that mediates the ubiquitination of target proteins, leading most often to their proteasomal degradation. This is Kelch-like protein 11 (KLHL11) from Homo sapiens (Human).